Here is a 374-residue protein sequence, read N- to C-terminus: Cell wall integrity and stress response component 1 (374 aa).

A signal peptide spans 1–29 (MVFLNSSPFKGRLLFFVYLLIISTRLVAA). The Extracellular segment spans residues 30-292 (DMNTQYGCYL…SNHTSLNAGA (263 aa)). The 89-residue stretch at 31-119 (MNTQYGCYLV…DLYWSVYLTG (89 aa)) folds into the WSC domain. The segment at 132 to 236 (VSSTTSSSSS…SSSSSSRPSS (105 aa)) is disordered. Asn278 and Asn284 each carry an N-linked (GlcNAc...) asparagine glycan. The chain crosses the membrane as a helical span at residues 293 to 313 (IVGIVIGCVAFAVVMALCIFL). Over 314-374 (YFYFRRFKIR…RKILRVTNLN (61 aa)) the chain is Cytoplasmic. Phosphoserine is present on Ser354.

Post-translationally, O-mannosylated.

The protein localises to the membrane. This Schizosaccharomyces pombe (strain 972 / ATCC 24843) (Fission yeast) protein is Cell wall integrity and stress response component 1 (wsc1).